A 198-amino-acid chain; its full sequence is Protein ORFi in retron Ec67 (198 aa).

Belongs to the CI repressor protein family.

This is Protein ORFi in retron Ec67 from Escherichia coli.